The primary structure comprises 171 residues: N5-carboxyaminoimidazole ribonucleotide mutase (171 aa).

Residues Ser13, Asp16, and Arg43 each contribute to the substrate site.

Belongs to the AIR carboxylase family. Class I subfamily.

It catalyses the reaction 5-carboxyamino-1-(5-phospho-D-ribosyl)imidazole + H(+) = 5-amino-1-(5-phospho-D-ribosyl)imidazole-4-carboxylate. It functions in the pathway purine metabolism; IMP biosynthesis via de novo pathway; 5-amino-1-(5-phospho-D-ribosyl)imidazole-4-carboxylate from 5-amino-1-(5-phospho-D-ribosyl)imidazole (N5-CAIR route): step 2/2. Functionally, catalyzes the conversion of N5-carboxyaminoimidazole ribonucleotide (N5-CAIR) to 4-carboxy-5-aminoimidazole ribonucleotide (CAIR). This chain is N5-carboxyaminoimidazole ribonucleotide mutase, found in Mycobacterium leprae (strain TN).